A 678-amino-acid chain; its full sequence is NADPH--cytochrome P450 reductase (678 aa).

Topologically, residues 1 to 21 (MADSNMDAGTTTSEMVAEEVS) are lumenal. A helical transmembrane segment spans residues 22 to 42 (LFSTTDVILFSLIVGVMTYWF). Residues 43–678 (LFRKKKEEVP…KGRYSLDVWS (636 aa)) are Cytoplasmic-facing. Ser-63 carries the post-translational modification Phosphoserine. In terms of domain architecture, Flavodoxin-like spans 80-224 (IIVFYGSQTG…DFITWREQFW (145 aa)). FMN-binding positions include 86 to 91 (SQTGTA), 138 to 141 (ATYG), 173 to 182 (LGNKTYEHFN), and Asp-208. The FAD-binding FR-type domain maps to 279 to 521 (KNPFLAVVTT…YVRKSQFRLP (243 aa)). Arg-298 contacts NADP(+). FAD is bound by residues Arg-424, 454-457 (RYYS), 472-474 (CAV), Tyr-478, and 488-491 (GVAT). NADP(+) contacts are provided by residues Thr-535, 596–597 (SR), 602–606 (KVYVQ), and Asp-639. FAD is bound at residue Trp-677.

The protein belongs to the NADPH--cytochrome P450 reductase family. It in the N-terminal section; belongs to the flavodoxin family. In the C-terminal section; belongs to the flavoprotein pyridine nucleotide cytochrome reductase family. It depends on FAD as a cofactor. FMN serves as cofactor.

It localises to the endoplasmic reticulum membrane. It catalyses the reaction 2 oxidized [cytochrome P450] + NADPH = 2 reduced [cytochrome P450] + NADP(+) + H(+). Functionally, this enzyme is required for electron transfer from NADP to cytochrome P450 in microsomes. It can also provide electron transfer to heme oxygenase and cytochrome B5. In Bos taurus (Bovine), this protein is NADPH--cytochrome P450 reductase.